The following is a 141-amino-acid chain: Putative pre-16S rRNA nuclease (141 aa).

It belongs to the YqgF nuclease family.

It is found in the cytoplasm. Functionally, could be a nuclease involved in processing of the 5'-end of pre-16S rRNA. In Cupriavidus pinatubonensis (strain JMP 134 / LMG 1197) (Cupriavidus necator (strain JMP 134)), this protein is Putative pre-16S rRNA nuclease.